The sequence spans 274 residues: Malonyl-[acyl-carrier protein] O-methyltransferase (274 aa).

The protein belongs to the methyltransferase superfamily.

It carries out the reaction malonyl-[ACP] + S-adenosyl-L-methionine = malonyl-[ACP] methyl ester + S-adenosyl-L-homocysteine. It functions in the pathway cofactor biosynthesis; biotin biosynthesis. Functionally, converts the free carboxyl group of a malonyl-thioester to its methyl ester by transfer of a methyl group from S-adenosyl-L-methionine (SAM). It allows to synthesize pimeloyl-ACP via the fatty acid synthetic pathway. The protein is Malonyl-[acyl-carrier protein] O-methyltransferase of Priestia megaterium (strain DSM 319 / IMG 1521) (Bacillus megaterium).